A 711-amino-acid polypeptide reads, in one-letter code: DNA topoisomerase 3 (711 aa).

Residues 2–135 (KSLILAEKPS…LRRLWISSVT (134 aa)) form the Toprim domain. Residues E8 and D104 each contribute to the Mg(2+) site. One can recognise a Topo IA-type catalytic domain in the interval 152 to 580 (YNDLYYAALA…EMKDFTKDVV (429 aa)). The interaction with DNA stretch occupies residues 186–191 (SLGRVQ). Y305 acts as the O-(5'-phospho-DNA)-tyrosine intermediate in catalysis. The interval 691-711 (MNKNEGLDNNPFKDALKNLNL) is disordered.

The protein belongs to the type IA topoisomerase family. Mg(2+) is required as a cofactor.

The catalysed reaction is ATP-independent breakage of single-stranded DNA, followed by passage and rejoining.. In terms of biological role, releases the supercoiling and torsional tension of DNA, which is introduced during the DNA replication and transcription, by transiently cleaving and rejoining one strand of the DNA duplex. Introduces a single-strand break via transesterification at a target site in duplex DNA. The scissile phosphodiester is attacked by the catalytic tyrosine of the enzyme, resulting in the formation of a DNA-(5'-phosphotyrosyl)-enzyme intermediate and the expulsion of a 3'-OH DNA strand. The free DNA strand then undergoes passage around the unbroken strand, thus removing DNA supercoils. Finally, in the religation step, the DNA 3'-OH attacks the covalent intermediate to expel the active-site tyrosine and restore the DNA phosphodiester backbone. This Staphylococcus aureus (strain MRSA252) protein is DNA topoisomerase 3.